The chain runs to 198 residues: IMP cyclohydrolase (198 aa).

The protein belongs to the archaeal IMP cyclohydrolase family.

The enzyme catalyses IMP + H2O = 5-formamido-1-(5-phospho-D-ribosyl)imidazole-4-carboxamide. Its pathway is purine metabolism; IMP biosynthesis via de novo pathway; IMP from 5-formamido-1-(5-phospho-D-ribosyl)imidazole-4-carboxamide: step 1/1. Functionally, catalyzes the cyclization of 5-formylamidoimidazole-4-carboxamide ribonucleotide to IMP. The protein is IMP cyclohydrolase of Methanopyrus kandleri (strain AV19 / DSM 6324 / JCM 9639 / NBRC 100938).